The sequence spans 245 residues: 4-hydroxy-tetrahydrodipicolinate reductase (245 aa).

NAD(+) contacts are provided by residues 7–12 (GARGKV), 75–77 (GTT), and 102–105 (APNF). Histidine 132 serves as the catalytic Proton donor/acceptor. Histidine 133 contributes to the (S)-2,3,4,5-tetrahydrodipicolinate binding site. Lysine 136 functions as the Proton donor in the catalytic mechanism. Position 142–143 (142–143 (GT)) interacts with (S)-2,3,4,5-tetrahydrodipicolinate.

The protein belongs to the DapB family.

Its subcellular location is the cytoplasm. The enzyme catalyses (S)-2,3,4,5-tetrahydrodipicolinate + NAD(+) + H2O = (2S,4S)-4-hydroxy-2,3,4,5-tetrahydrodipicolinate + NADH + H(+). The catalysed reaction is (S)-2,3,4,5-tetrahydrodipicolinate + NADP(+) + H2O = (2S,4S)-4-hydroxy-2,3,4,5-tetrahydrodipicolinate + NADPH + H(+). It functions in the pathway amino-acid biosynthesis; L-lysine biosynthesis via DAP pathway; (S)-tetrahydrodipicolinate from L-aspartate: step 4/4. Its function is as follows. Catalyzes the conversion of 4-hydroxy-tetrahydrodipicolinate (HTPA) to tetrahydrodipicolinate. This chain is 4-hydroxy-tetrahydrodipicolinate reductase, found in Mycolicibacterium vanbaalenii (strain DSM 7251 / JCM 13017 / BCRC 16820 / KCTC 9966 / NRRL B-24157 / PYR-1) (Mycobacterium vanbaalenii).